The sequence spans 153 residues: UPF0260 protein YcgN (153 aa).

This sequence belongs to the UPF0260 family.

In Escherichia coli O6:K15:H31 (strain 536 / UPEC), this protein is UPF0260 protein YcgN.